Here is a 113-residue protein sequence, read N- to C-terminus: MLGTANLPSRNKYKAKATILHMNRNLYLVAYDICNPRRLRQVCRYLTGYKVSGQKSVFEIWVTPTELHTIRTELDKLMDTQADRLHILSLDPRMKPRCYGNASTFTVQHFCIV.

Mg(2+) is bound at residue Asp32.

It belongs to the CRISPR-associated endoribonuclease Cas2 protein family. Homodimer, forms a heterotetramer with a Cas1 homodimer. Mg(2+) serves as cofactor.

In terms of biological role, CRISPR (clustered regularly interspaced short palindromic repeat), is an adaptive immune system that provides protection against mobile genetic elements (viruses, transposable elements and conjugative plasmids). CRISPR clusters contain sequences complementary to antecedent mobile elements and target invading nucleic acids. CRISPR clusters are transcribed and processed into CRISPR RNA (crRNA). Functions as a ssRNA-specific endoribonuclease. Involved in the integration of spacer DNA into the CRISPR cassette. This is CRISPR-associated endoribonuclease Cas2 2 (cas22) from Nitrosomonas europaea (strain ATCC 19718 / CIP 103999 / KCTC 2705 / NBRC 14298).